The sequence spans 122 residues: MIQTQSYLNVADNSGARKIMCIRVLGTSNPSYASIGDVIIGVVKDASPNMPVKRSDVVRAVVVRTRKALRRTDGMSIRFGDNAAVIINQDNNPRGTRVFGPIARELRDKNFSKIVSLAPEVV.

It belongs to the universal ribosomal protein uL14 family. As to quaternary structure, part of the 50S ribosomal subunit.

The protein resides in the plastid. It is found in the chloroplast. Binds to 23S rRNA. The protein is Large ribosomal subunit protein uL14c of Pyropia yezoensis (Susabi-nori).